Consider the following 344-residue polypeptide: Envelope glycoprotein M (344 aa).

Residues 1 to 12 (MASSRVDTINLR) are Intravirion-facing. Residues 13 to 33 (IWLVSIICAALSFINVTVHLI) form a helical membrane-spanning segment. The Virion surface segment spans residues 34-76 (AINFPNLGFPCAYFEINDLKAVNLSANNEIYQMTHQLYINPVQ). The helical transmembrane segment at 77-97 (IICYVLIMAILFLLIIIYYIV) threads the bilayer. Residues 98–125 (CCAKVFSSNKTSNVNQTTRDITWMGDTS) lie on the Intravirion side of the membrane. The helical transmembrane segment at 126–146 (SCFQFILIMDTFQLFVTALSF) threads the bilayer. Arg147 is a topological domain (virion surface). Residues 148–168 (LVALGAFAYSIFFVCFTTFNV) form a helical membrane-spanning segment. Residues 169–203 (TLITQFQSADKSFFAFQKIHPNLKGTVQFKTVVIN) lie on the Intravirion side of the membrane. Residues 204–224 (LSELMLGYSTMFLGITTCLGV) traverse the membrane as a helical segment. Residues 225 to 238 (GNSIYIRSITVAFS) are Virion surface-facing. A helical membrane pass occupies residues 239 to 259 (SINTFLVMACIYSIVIEAVLV). The Intravirion segment spans residues 260–263 (RYVK). The chain crosses the membrane as a helical span at residues 264 to 284 (PLFGYYVGMFCGAVGLSFPIL). Over 285 to 293 (QYETFFESE) the chain is Virion surface. The chain crosses the membrane as a helical span at residues 294-314 (WSTGLIINLSVVAIISIGFII). Over 315–344 (CRLVRYLVKKKRRYKQLLNAESSSLMDENE) the chain is Intravirion.

It belongs to the herpesviridae glycoprotein M family. Interacts (via N-terminus) with gN (via N-terminus). The gM-gN heterodimer forms the gCII complex.

The protein localises to the virion membrane. Its subcellular location is the host Golgi apparatus. It is found in the host trans-Golgi network. It localises to the host endosome membrane. The protein resides in the host nucleus inner membrane. In terms of biological role, envelope glycoprotein important for virion assembly and egress. Plays a role in the correct incorporation of gH-gL into virion membrane. Directs the glycoprotein N (gN) to the host trans-Golgi network. In Homo sapiens (Human), this protein is Envelope glycoprotein M.